Consider the following 483-residue polypeptide: Betaine aldehyde dehydrogenase (483 aa).

Residues isoleucine 27 and aspartate 93 each coordinate K(+). Glycine 149–tryptophan 151 lines the NAD(+) pocket. Residue lysine 161 is the Charge relay system of the active site. Residue lysine 175–glutamate 178 coordinates NAD(+). Position 179 (valine 179) interacts with K(+). Serine 228 to threonine 231 provides a ligand contact to NAD(+). Valine 243 provides a ligand contact to K(+). Catalysis depends on glutamate 249, which acts as the Proton acceptor. 3 residues coordinate NAD(+): glycine 251, cysteine 283, and glutamate 380. The active-site Nucleophile is cysteine 283. A Cysteine sulfenic acid (-SOH) modification is found at cysteine 283. 2 residues coordinate K(+): lysine 450 and glycine 453. Residue glutamate 457 is the Charge relay system of the active site.

This sequence belongs to the aldehyde dehydrogenase family. In terms of assembly, dimer of dimers. Requires K(+) as cofactor.

The enzyme catalyses betaine aldehyde + NAD(+) + H2O = glycine betaine + NADH + 2 H(+). Its pathway is amine and polyamine biosynthesis; betaine biosynthesis via choline pathway; betaine from betaine aldehyde: step 1/1. Involved in the biosynthesis of the osmoprotectant glycine betaine. Catalyzes the irreversible oxidation of betaine aldehyde to the corresponding acid. The chain is Betaine aldehyde dehydrogenase from Cereibacter sphaeroides (strain ATCC 17023 / DSM 158 / JCM 6121 / CCUG 31486 / LMG 2827 / NBRC 12203 / NCIMB 8253 / ATH 2.4.1.) (Rhodobacter sphaeroides).